The primary structure comprises 295 residues: UDP-N-acetylenolpyruvoylglucosamine reductase (295 aa).

In terms of domain architecture, FAD-binding PCMH-type spans 23 to 188 (QVGGPADFLA…ISAKFALKPG (166 aa)). Arg167 is an active-site residue. The Proton donor role is filled by Ser217. The active site involves Glu287.

Belongs to the MurB family. FAD is required as a cofactor.

It localises to the cytoplasm. It carries out the reaction UDP-N-acetyl-alpha-D-muramate + NADP(+) = UDP-N-acetyl-3-O-(1-carboxyvinyl)-alpha-D-glucosamine + NADPH + H(+). It participates in cell wall biogenesis; peptidoglycan biosynthesis. Its function is as follows. Cell wall formation. In Streptococcus equi subsp. equi (strain 4047), this protein is UDP-N-acetylenolpyruvoylglucosamine reductase.